Consider the following 485-residue polypeptide: Lysophospholipid acyltransferase 5 (485 aa).

Ala2 carries the post-translational modification N-acetylalanine. 7 consecutive transmembrane segments (helical) span residues 35–55, 82–102, 108–128, 139–158, 176–196, 232–252, and 283–303; these read ASEQ…FALF, YNFG…FLIL, TITA…AGYY, WTMP…MDYY, IWGV…GAFL, LALG…ITED, and VTCW…FNGL. Active-site residues include Asn336 and His372. 3 consecutive transmembrane segments (helical) span residues 362–382, 420–440, and 448–468; these read GLSL…LVCF, LAQQ…FCLF, and VYKS…FILP. Residues 482–485 carry the Di-lysine motif motif; sequence KKME.

Belongs to the membrane-bound acyltransferase family.

It is found in the endoplasmic reticulum membrane. It catalyses the reaction a 1-acyl-sn-glycero-3-phosphocholine + an acyl-CoA = a 1,2-diacyl-sn-glycero-3-phosphocholine + CoA. The catalysed reaction is a 1-acyl-sn-glycero-3-phosphoethanolamine + an acyl-CoA = a 1,2-diacyl-sn-glycero-3-phosphoethanolamine + CoA. The enzyme catalyses a 1-acyl-sn-glycero-3-phospho-L-serine + an acyl-CoA = a 1,2-diacyl-sn-glycero-3-phospho-L-serine + CoA. It carries out the reaction (9Z,12Z)-octadecadienoyl-CoA + a 1-acyl-sn-glycero-3-phosphocholine = 1-acyl-2-(9Z,12Z)-octadecadienoyl-sn-glycero-3-phosphocholine + CoA. It catalyses the reaction (5Z,8Z,11Z,14Z)-eicosatetraenoyl-CoA + a 1-acyl-sn-glycero-3-phosphocholine = 1-acyl-2-(5Z,8Z,11Z,14Z-eicosatetraenoyl)-sn-glycero-3-phosphocholine + CoA. The catalysed reaction is dodecanoyl-CoA + 1-hexadecanoyl-sn-glycero-3-phosphocholine = 1-hexadecanoyl-2-dodecanoyl-sn-glycero-3-phosphocholine + CoA. The enzyme catalyses octadecanoyl-CoA + 1-hexadecanoyl-sn-glycero-3-phosphocholine = 1-hexadecanoyl-2-octadecanoyl-sn-glycero-3-phosphocholine + CoA. It carries out the reaction 1-dodecanoyl-sn-glycero-3-phosphocholine + hexadecanoyl-CoA = 1-dodecanoyl-2-hexadecanoyl-sn-glycero-3-phosphocholine + CoA. It catalyses the reaction 1-tetradecanoyl-sn-glycero-3-phosphocholine + hexadecanoyl-CoA = 1-tetradecanoyl-2-hexadecanoyl-sn-glycero-3-phosphocholine + CoA. The catalysed reaction is 1-hexadecanoyl-sn-glycero-3-phosphocholine + hexadecanoyl-CoA = 1,2-dihexadecanoyl-sn-glycero-3-phosphocholine + CoA. The enzyme catalyses 1-octadecanoyl-sn-glycero-3-phosphocholine + hexadecanoyl-CoA = 1-octadecanoyl-2-hexadecanoyl-sn-glycero-3-phosphocholine + CoA. It carries out the reaction 1-(9Z-octadecenoyl)-sn-glycero-3-phosphocholine + hexadecanoyl-CoA = 1-(9Z-octadecenoyl)-2-hexadecanoyl-sn-glycero-3-phosphocholine + CoA. It catalyses the reaction (9Z)-hexadecenoyl-CoA + 1-hexadecanoyl-sn-glycero-3-phosphocholine = 1-hexadecanoyl-2-(9Z-hexadecenoyl)-sn-glycero-3-phosphocholine + CoA. The catalysed reaction is 1-hexadecanoyl-sn-glycero-3-phosphocholine + (9Z)-octadecenoyl-CoA = 1-hexadecanoyl-2-(9Z-octadecenoyl)-sn-glycero-3-phosphocholine + CoA. The enzyme catalyses (9Z,12Z)-octadecadienoyl-CoA + 1-hexadecanoyl-sn-glycero-3-phosphocholine = 1-hexadecanoyl-2-(9Z,12Z-octadecadienoyl)-sn-glycero-3-phosphocholine + CoA. It carries out the reaction 1-dodecanoyl-sn-glycero-3-phosphocholine + (5Z,8Z,11Z,14Z)-eicosatetraenoyl-CoA = 1-dodecanoyl-2-(5Z,8Z,11Z,14Z)-eicosatetraenoyl-sn-glycero-3-phosphocholine + CoA. It catalyses the reaction (5Z,8Z,11Z,14Z)-eicosatetraenoyl-CoA + 1-hexadecanoyl-sn-glycero-3-phosphocholine = 1-hexadecanoyl-2-(5Z,8Z,11Z,14Z-eicosatetraenoyl)-sn-glycero-3-phosphocholine + CoA. The catalysed reaction is 1-octadecanoyl-sn-glycero-3-phosphocholine + (5Z,8Z,11Z,14Z)-eicosatetraenoyl-CoA = 1-octadecanoyl-2-(5Z,8Z,11Z,14Z-eicosatetraenoyl)-sn-glycero-3-phosphocholine + CoA. The enzyme catalyses 1-eicosanoyl-sn-glycero-3-phosphocholine + (5Z,8Z,11Z,14Z)-eicosatetraenoyl-CoA = 1-eicosanoyl-2-(5Z,8Z,11Z,14Z)-eicosatetraenoyl-sn-glycero-3-phosphocholine + CoA. It carries out the reaction 1-(9Z-octadecenoyl)-sn-glycero-3-phosphocholine + (9Z)-octadecenoyl-CoA = 1,2-di-(9Z-octadecenoyl)-sn-glycero-3-phosphocholine + CoA. It catalyses the reaction 1-(9Z-octadecenoyl)-sn-glycero-3-phosphocholine + (9Z,12Z)-octadecadienoyl-CoA = 1-(9Z)-octadecenoyl-2-(9Z,12Z)-octadecadienoyl-sn-glycero-3-phosphocholine + CoA. The catalysed reaction is 1-(9Z-octadecenoyl)-sn-glycero-3-phosphocholine + (5Z,8Z,11Z,14Z)-eicosatetraenoyl-CoA = 1-(9Z)-octadecenoyl-2-(5Z,8Z,11Z,14Z)-icosatetraenoyl-sn-glycero-3-phosphocholine + CoA. The enzyme catalyses a 1-acyl-sn-glycero-3-phosphoethanolamine + (9Z,12Z)-octadecadienoyl-CoA = 1-acyl-2-(9Z,12Z)-octadecadienoyl-sn-glycero-3-phosphoethanolamine + CoA. It carries out the reaction 1-(9Z-octadecenoyl)-sn-glycero-3-phosphoethanolamine + (9Z,12Z)-octadecadienoyl-CoA = 1-(9Z)-octadecenoyl-2-(9Z,12Z)-octadecadienoyl-sn-glycero-3-phosphoethanolamine + CoA. It catalyses the reaction 1-(10Z-heptadecenoyl)-sn-glycero-3-phosphoethanolamine + (9Z,12Z)-octadecadienoyl-CoA = 1-(10Z-heptadecenoyl)-2-(9Z,12Z-octadecadienoyl)-sn-glycero-3-phosphoethanolamine + CoA. The catalysed reaction is a 1-acyl-sn-glycero-3-phosphoethanolamine + (5Z,8Z,11Z,14Z)-eicosatetraenoyl-CoA = 1-acyl-2-(5Z,8Z,11Z,14Z)-eicosatetraenoyl-sn-glycero-3-phosphoethanolamine + CoA. The enzyme catalyses 1-hexadecanoyl-sn-glycero-3-phosphoethanolamine + (5Z,8Z,11Z,14Z)-eicosatetraenoyl-CoA = 1-hexadecanoyl-2-(5Z,8Z,11Z,14Z-eicosatetraenoyl)-sn-glycero-3-phosphoethanolamine + CoA. It carries out the reaction 1-(9Z-octadecenoyl)-sn-glycero-3-phosphoethanolamine + (5Z,8Z,11Z,14Z)-eicosatetraenoyl-CoA = 1-(9Z)-octadecenoyl-2-(5Z,8Z,11Z,14Z)-eicosatetraenoyl-sn-glycero-3-phosphoethanolamine + CoA. It catalyses the reaction 1-(10Z-heptadecenoyl)-sn-glycero-3-phosphoethanolamine + (5Z,8Z,11Z,14Z)-eicosatetraenoyl-CoA = 1-(10Z-heptadecenoyl)-2-(5Z,8Z,11Z,14Z-eicosatetraenoyl)-sn-glycero-3-phosphoethanolamine + CoA. The catalysed reaction is a 1-O-(1Z-alkenyl)-sn-glycero-3-phosphoethanolamine + (5Z,8Z,11Z,14Z)-eicosatetraenoyl-CoA = 1-O-(1Z)-alkenyl-2-(5Z,8Z,11Z,14Z)-eicosatetraenoyl-sn-glycero-3-phosphoethanolamine + CoA. The enzyme catalyses a 1-acyl-sn-glycero-3-phospho-L-serine + (9Z,12Z)-octadecadienoyl-CoA = 1-acyl-2-(9Z,12Z-octadecadienoyl)-sn-glycero-3-phospho-L-serine + CoA. It carries out the reaction a 1-acyl-sn-glycero-3-phospho-L-serine + (5Z,8Z,11Z,14Z)-eicosatetraenoyl-CoA = 1-acyl-2-(5Z,8Z,11Z,14Z-eicosatetraenoyl)-sn-glycero-3-phospho-L-serine + CoA. It catalyses the reaction 1-hexadecanoyl-sn-glycero-3-phospho-L-serine + (9Z)-octadecenoyl-CoA = 1-hexadecanoyl-2-(9Z-octadecenoyl)-sn-glycero-3-phospho-L-serine + CoA. The catalysed reaction is 1-(9Z-octadecenoyl)-sn-glycero-3-phospho-L-serine + (9Z)-octadecenoyl-CoA = 1,2-di-(9Z)-octadecenoyl-sn-glycero-3-phospho-L-serine + CoA. The enzyme catalyses 1-hexadecanoyl-sn-glycero-3-phospho-L-serine + (9Z,12Z)-octadecadienoyl-CoA = 1-hexadecanoyl-2-(9Z,12Z-octadecadienoyl)-sn-glycero-3-phospho-L-serine + CoA. It carries out the reaction 1-(9Z-octadecenoyl)-sn-glycero-3-phospho-L-serine + (9Z,12Z)-octadecadienoyl-CoA = 1-(9Z-octadecenoyl)-2-(9Z,12Z-octadienoyl)-sn-glycero-3-phospho-L-serine + CoA. It catalyses the reaction 1-hexadecanoyl-sn-glycero-3-phospho-L-serine + (5Z,8Z,11Z,14Z)-eicosatetraenoyl-CoA = 1-hexadecanoyl-2-(5Z,8Z,11Z,14Z-eicosatetraenoyl)-sn-glycero-3-phospho-L-serine + CoA. The catalysed reaction is 1-(9Z-octadecenoyl)-sn-glycero-3-phospho-L-serine + (5Z,8Z,11Z,14Z)-eicosatetraenoyl-CoA = 1-(9Z-octadecenoyl)-2-(5Z,8Z,11Z,14Z-eicosatetraenoyl)-sn-glycero-3-phospho-L-serine + CoA. Its pathway is lipid metabolism; phospholipid metabolism. Its function is as follows. Lysophospholipid O-acyltransferase (LPLAT) that catalyzes the reacylation step of the phospholipid remodeling process also known as the Lands cycle. Catalyzes transfer of the fatty acyl chain from fatty acyl-CoA to 1-acyl lysophospholipid to form various classes of phospholipids. Converts 1-acyl lysophosphatidylcholine (LPC) into phosphatidylcholine (PC) (LPCAT activity), 1-acyl lysophosphatidylserine (LPS) into phosphatidylserine (PS) (LPSAT activity) and 1-acyl lysophosphatidylethanolamine (LPE) into phosphatidylethanolamine (PE) (LPEAT activity). Favors polyunsaturated fatty acyl-CoAs as acyl donors compared to saturated fatty acyl-CoAs. Has higher activity for LPC acyl acceptors compared to LPEs and LPSs. Can also transfer the fatty acyl chain from fatty acyl-CoA to 1-O-alkyl lysophospholipid or 1-O-alkenyl lysophospholipid with lower efficiency. Acts as a major LPC O-acyltransferase in liver and intestine. As a component of the liver X receptor/NR1H3 or NR1H2 signaling pathway, mainly catalyzes the incorporation of arachidonate into PCs of endoplasmic reticulum (ER) membranes, increasing membrane dynamics and enabling triacylglycerols transfer to nascent very low-density lipoprotein (VLDL) particles. Promotes processing of sterol regulatory protein SREBF1 in hepatocytes, likely by facilitating the translocation of SREBF1-SCAP complex from ER to the Golgi apparatus. Participates in mechanisms by which the liver X receptor/NR1H3 or NR1H2 signaling pathway counteracts lipid-induced ER stress response and inflammation. Down-regulates hepatic inflammation by limiting arachidonic acid availability for synthesis of inflammatory eicosanoids, such as prostaglandins. In enterocytes, acts as a component of a gut-brain feedback loop that coordinates dietary lipid absorption and food intake. Regulates the abundance of PCs containing linoleate and arachidonate in enterocyte membranes, enabling passive diffusion of fatty acids and cholesterol across the membrane for efficient chylomicron assembly. In the intestinal crypt, acts as a component of dietary-responsive phospholipid-cholesterol axis, regulating the biosynthesis of cholesterol and its mitogenic effects on intestinal stem cells. This is Lysophospholipid acyltransferase 5 (LPCAT3) from Bos taurus (Bovine).